Reading from the N-terminus, the 63-residue chain is Conotoxin Vi5.1a (63 aa).

Positions 1–22 (MRCVPVFIILLLLIPSAPSADA) are cleaved as a signal peptide. Positions 23–50 (QPKTKDDVPLASYHDNAERTLQRLWNQR) are excised as a propeptide. Position 62 is a proline amide (proline 62).

The protein belongs to the conotoxin T superfamily. In terms of processing, contains 2 disulfide bonds that can be either 'C1-C3, C2-C4' or 'C1-C4, C2-C3', since these disulfide connectivities have been observed for conotoxins with cysteine framework V (for examples, see AC P0DQQ7 and AC P81755). As to expression, expressed by the venom duct.

The protein resides in the secreted. The sequence is that of Conotoxin Vi5.1a from Conus virgo (Virgin cone).